Here is a 337-residue protein sequence, read N- to C-terminus: Ribosomal RNA small subunit methyltransferase H (337 aa).

S-adenosyl-L-methionine-binding positions include 33–35, Asp53, Asp101, and Gln108; that span reads AGH.

Belongs to the methyltransferase superfamily. RsmH family.

It localises to the cytoplasm. The catalysed reaction is cytidine(1402) in 16S rRNA + S-adenosyl-L-methionine = N(4)-methylcytidine(1402) in 16S rRNA + S-adenosyl-L-homocysteine + H(+). In terms of biological role, specifically methylates the N4 position of cytidine in position 1402 (C1402) of 16S rRNA. The polypeptide is Ribosomal RNA small subunit methyltransferase H (Herpetosiphon aurantiacus (strain ATCC 23779 / DSM 785 / 114-95)).